The following is a 116-amino-acid chain: Large ribosomal subunit protein bL20 (116 aa).

It belongs to the bacterial ribosomal protein bL20 family.

Binds directly to 23S ribosomal RNA and is necessary for the in vitro assembly process of the 50S ribosomal subunit. It is not involved in the protein synthesizing functions of that subunit. This is Large ribosomal subunit protein bL20 from Synechococcus elongatus (strain ATCC 33912 / PCC 7942 / FACHB-805) (Anacystis nidulans R2).